A 213-amino-acid polypeptide reads, in one-letter code: Large ribosomal subunit protein uL3 (213 aa).

The protein belongs to the universal ribosomal protein uL3 family. Part of the 50S ribosomal subunit. Forms a cluster with proteins L14 and L19.

One of the primary rRNA binding proteins, it binds directly near the 3'-end of the 23S rRNA, where it nucleates assembly of the 50S subunit. The polypeptide is Large ribosomal subunit protein uL3 (Bifidobacterium longum subsp. infantis (strain ATCC 15697 / DSM 20088 / JCM 1222 / NCTC 11817 / S12)).